We begin with the raw amino-acid sequence, 213 residues long: A-type ATP synthase subunit D (213 aa).

It belongs to the V-ATPase D subunit family. In terms of assembly, has multiple subunits with at least A(3), B(3), C, D, E, F, H, I and proteolipid K(x).

Its subcellular location is the cell membrane. In terms of biological role, component of the A-type ATP synthase that produces ATP from ADP in the presence of a proton gradient across the membrane. The polypeptide is A-type ATP synthase subunit D (Saccharolobus islandicus (strain Y.N.15.51 / Yellowstone #2) (Sulfolobus islandicus)).